A 323-amino-acid polypeptide reads, in one-letter code: Mas-related G-protein coupled receptor member B4 (323 aa).

At 1-34 the chain is on the extracellular side; the sequence is MSPTTQAWSINNTVVKENYYTEILSCITTFNTLN. N-linked (GlcNAc...) asparagine glycosylation occurs at Asn11. A helical transmembrane segment spans residues 35–55; sequence FLIVIISVVGMAGNATVLWLL. The Cytoplasmic portion of the chain corresponds to 56 to 63; that stretch reads GFHMHRNA. Residues 64 to 84 traverse the membrane as a helical segment; sequence FSVYVLNLAGADFLYLCAQTV. The Extracellular portion of the chain corresponds to 85 to 98; the sequence is YSLECVLQFDNSYF. Residues 99–119 traverse the membrane as a helical segment; the sequence is YFLLTILMFNYLAGFCMIAAI. The Cytoplasmic segment spans residues 120–147; the sequence is STERCLSVTWPIWYHCQRPRHTSATVCA. The helical transmembrane segment at 148 to 168 threads the bilayer; sequence LFWAFSLLLSLLLGQGCGFLF. Topologically, residues 169–180 are extracellular; that stretch reads SKFDYSFCRYCN. Residues 181 to 201 form a helical membrane-spanning segment; sequence FIATAFLIVIFMVLFVSSLAL. The Cytoplasmic portion of the chain corresponds to 202–224; the sequence is LAKIICGSHRIPVTRFYVTIALT. A helical transmembrane segment spans residues 225 to 245; it reads VLVFIFFGLPIGICVFLLPWI. Residues 246-255 are Extracellular-facing; it reads HMMLSSFFYE. A helical membrane pass occupies residues 256–276; sequence MVTLLSCVNSCANPIIYFFVG. Topologically, residues 277–323 are cytoplasmic; it reads SIRHHRLQRQTLKLLLQRAMQDTPEEEGGERGPSQKSEDLEVVRCSS. The interval 298–323 is disordered; that stretch reads DTPEEEGGERGPSQKSEDLEVVRCSS. The segment covering 312-323 has biased composition (basic and acidic residues); it reads KSEDLEVVRCSS.

Belongs to the G-protein coupled receptor 1 family. Mas subfamily. Expressed strongly in newborn dorsal root ganglia, adult dorsal root ganglia and trigeminal ganlia.

The protein resides in the membrane. Its function is as follows. Orphan receptor. Probably involved in the function of nociceptive neurons. May regulate nociceptor function and/or development, including the sensation or modulation of pain. The chain is Mas-related G-protein coupled receptor member B4 (Mrgprb4) from Rattus norvegicus (Rat).